The following is a 404-amino-acid chain: Probable tRNA sulfurtransferase (404 aa).

The region spanning 60 to 165 (QPIVEALKLV…DEAAYISYEE (106 aa)) is the THUMP domain. ATP contacts are provided by residues 183–184 (ML), 208–209 (HF), arginine 265, glycine 287, and glutamine 296.

The protein belongs to the ThiI family.

It localises to the cytoplasm. The catalysed reaction is [ThiI sulfur-carrier protein]-S-sulfanyl-L-cysteine + a uridine in tRNA + 2 reduced [2Fe-2S]-[ferredoxin] + ATP + H(+) = [ThiI sulfur-carrier protein]-L-cysteine + a 4-thiouridine in tRNA + 2 oxidized [2Fe-2S]-[ferredoxin] + AMP + diphosphate. It carries out the reaction [ThiS sulfur-carrier protein]-C-terminal Gly-Gly-AMP + S-sulfanyl-L-cysteinyl-[cysteine desulfurase] + AH2 = [ThiS sulfur-carrier protein]-C-terminal-Gly-aminoethanethioate + L-cysteinyl-[cysteine desulfurase] + A + AMP + 2 H(+). Its pathway is cofactor biosynthesis; thiamine diphosphate biosynthesis. Functionally, catalyzes the ATP-dependent transfer of a sulfur to tRNA to produce 4-thiouridine in position 8 of tRNAs, which functions as a near-UV photosensor. Also catalyzes the transfer of sulfur to the sulfur carrier protein ThiS, forming ThiS-thiocarboxylate. This is a step in the synthesis of thiazole, in the thiamine biosynthesis pathway. The sulfur is donated as persulfide by IscS. The protein is Probable tRNA sulfurtransferase of Streptococcus pyogenes serotype M4 (strain MGAS10750).